The primary structure comprises 92 residues: Conotoxin Ac8.1 (92 aa).

An N-terminal signal peptide occupies residues 1 to 19; the sequence is LKMGAMFVLLLLFTLASSQ. The propeptide occupies 20–44; the sequence is QEGDVQARKTSLKSDFYRALRQYDR. Glutamine 45 bears the Pyrrolidone carboxylic acid mark.

It belongs to the conotoxin S superfamily. Post-translationally, contains 5 disulfide bonds. In terms of tissue distribution, expressed by the venom duct.

It is found in the secreted. The sequence is that of Conotoxin Ac8.1 from Conus achatinus (Little frog cone).